Reading from the N-terminus, the 366-residue chain is UDP-N-acetylglucosamine--N-acetylmuramyl-(pentapeptide) pyrophosphoryl-undecaprenol N-acetylglucosamine transferase (366 aa).

UDP-N-acetyl-alpha-D-glucosamine is bound by residues Thr-10 to Gly-12, Asn-124, Arg-165, Ser-195, Ile-250, and Gln-295.

It belongs to the glycosyltransferase 28 family. MurG subfamily.

The protein resides in the cell inner membrane. It carries out the reaction di-trans,octa-cis-undecaprenyl diphospho-N-acetyl-alpha-D-muramoyl-L-alanyl-D-glutamyl-meso-2,6-diaminopimeloyl-D-alanyl-D-alanine + UDP-N-acetyl-alpha-D-glucosamine = di-trans,octa-cis-undecaprenyl diphospho-[N-acetyl-alpha-D-glucosaminyl-(1-&gt;4)]-N-acetyl-alpha-D-muramoyl-L-alanyl-D-glutamyl-meso-2,6-diaminopimeloyl-D-alanyl-D-alanine + UDP + H(+). It participates in cell wall biogenesis; peptidoglycan biosynthesis. In terms of biological role, cell wall formation. Catalyzes the transfer of a GlcNAc subunit on undecaprenyl-pyrophosphoryl-MurNAc-pentapeptide (lipid intermediate I) to form undecaprenyl-pyrophosphoryl-MurNAc-(pentapeptide)GlcNAc (lipid intermediate II). The polypeptide is UDP-N-acetylglucosamine--N-acetylmuramyl-(pentapeptide) pyrophosphoryl-undecaprenol N-acetylglucosamine transferase (Thermodesulfovibrio yellowstonii (strain ATCC 51303 / DSM 11347 / YP87)).